Reading from the N-terminus, the 424-residue chain is Enolase (424 aa).

(2R)-2-phosphoglycerate is bound at residue Gln-162. The Proton donor role is filled by Glu-204. The Mg(2+) site is built by Asp-241, Glu-284, and Asp-311. (2R)-2-phosphoglycerate is bound by residues Lys-336, Arg-365, Ser-366, and Lys-387. Lys-336 (proton acceptor) is an active-site residue.

This sequence belongs to the enolase family. Mg(2+) is required as a cofactor.

Its subcellular location is the cytoplasm. The protein localises to the secreted. It is found in the cell surface. It carries out the reaction (2R)-2-phosphoglycerate = phosphoenolpyruvate + H2O. It functions in the pathway carbohydrate degradation; glycolysis; pyruvate from D-glyceraldehyde 3-phosphate: step 4/5. Functionally, catalyzes the reversible conversion of 2-phosphoglycerate (2-PG) into phosphoenolpyruvate (PEP). It is essential for the degradation of carbohydrates via glycolysis. This is Enolase from Maricaulis maris (strain MCS10) (Caulobacter maris).